The following is a 450-amino-acid chain: Chromosomal replication initiator protein DnaA (450 aa).

Residues 1–77 (MTENEQIFWN…EVYNAQIAVD (77 aa)) are domain I, interacts with DnaA modulators. Residues 77 to 109 (DYVYEDDLMIEQQHQGQQGYTEQAFQQLPAVQS) form a domain II region. The interval 110–328 (DLNPKYSFDN…GALKDISLVA (219 aa)) is domain III, AAA+ region. ATP is bound by residues G154, G156, K157, and T158. The domain IV, binds dsDNA stretch occupies residues 329–450 (NFKQIDTITV…EIETIKNKIK (122 aa)).

The protein belongs to the DnaA family. In terms of assembly, oligomerizes as a right-handed, spiral filament on DNA at oriC.

The protein localises to the cytoplasm. Plays an essential role in the initiation and regulation of chromosomal replication. ATP-DnaA binds to the origin of replication (oriC) to initiate formation of the DNA replication initiation complex once per cell cycle. Binds the DnaA box (a 9 base pair repeat at the origin) and separates the double-stranded (ds)DNA. Forms a right-handed helical filament on oriC DNA; dsDNA binds to the exterior of the filament while single-stranded (ss)DNA is stabiized in the filament's interior. The ATP-DnaA-oriC complex binds and stabilizes one strand of the AT-rich DNA unwinding element (DUE), permitting loading of DNA polymerase. After initiation quickly degrades to an ADP-DnaA complex that is not apt for DNA replication. Binds acidic phospholipids. In Streptococcus equi subsp. equi (strain 4047), this protein is Chromosomal replication initiator protein DnaA.